We begin with the raw amino-acid sequence, 418 residues long: MTLEETIVEVGVRAKAAAADLMSLATRQKDAVLSQVGELLVAEKAFLQEENEKDLAAGREKGLSDAMLDRLALTDSVIESMVKGLKEVIALPDPVGRTLGSVKRPNGLSVGRMCVPLGVIAMIYESRPNVTIDAAALCLKAGNAIILRGGSEAIHSNLALASILRRALEEAEVNPDSVQVIPMIDREAITIMLGLEDSIDLVIPRGGEGLIRFVSKNSSIPVLKHYKGVCHAYIDKDADLAKVAPIVINAKTQRPGVCNALEGILIHEDIVADVLPGLATELAELGVEMRGCSQSLPFSEHIVAASEEDWGTEFLRLCLCVKVVRSFEDAKSYIRKYGSQHTEAIITENYTTAHRFVAEVDASAVVVNASTRFNDGGELGLGAEIGISTTKLHAYGPMGLEELTTKKFVILGDGQIRS.

The protein belongs to the gamma-glutamyl phosphate reductase family.

It localises to the cytoplasm. The catalysed reaction is L-glutamate 5-semialdehyde + phosphate + NADP(+) = L-glutamyl 5-phosphate + NADPH + H(+). The protein operates within amino-acid biosynthesis; L-proline biosynthesis; L-glutamate 5-semialdehyde from L-glutamate: step 2/2. Functionally, catalyzes the NADPH-dependent reduction of L-glutamate 5-phosphate into L-glutamate 5-semialdehyde and phosphate. The product spontaneously undergoes cyclization to form 1-pyrroline-5-carboxylate. This Desulfotalea psychrophila (strain LSv54 / DSM 12343) protein is Gamma-glutamyl phosphate reductase.